The primary structure comprises 539 residues: Cell division control protein 6 homolog (539 aa).

Residues 1 to 40 (MPAIAGPSSSPQKHVVGSRSESIGGVRSAEVNTSRKRKLI) form a disordered region. A Nuclear localization signal motif is present at residues 35–38 (RKRK).

It belongs to the CDC6/cdc18 family. In terms of tissue distribution, highly expressed in roots, flower buds and etiolated seedlings. Expressed in leaves and stems. Highly expressed in proliferating cells such as root meristems, leaf primordia and young growing leaves, as well as cells undergoing endoreduplication cycles.

Its subcellular location is the nucleus. Its function is as follows. May be involved in the initiation of DNA replication. May play a role in endoreduplication. Could act as one of the factors that contributes to maintain endoreduplication competence. The sequence is that of Cell division control protein 6 homolog from Arabidopsis thaliana (Mouse-ear cress).